The sequence spans 451 residues: Methionine aminopeptidase 2-2 (451 aa).

Positions 1 to 97 (MAAQVEDDVA…PRVLISDLFP (97 aa)) are disordered. A compositionally biased stretch (polar residues) spans 19–28 (TKPTNGTSQP). Acidic residues predominate over residues 35 to 45 (EAEDSDDDAEG). Residues 60–73 (KKKKKRKPRKKKKA) are compositionally biased toward basic residues. Residues 74–83 (GTSATAGAKS) show a composition bias toward low complexity. Residue histidine 204 coordinates substrate. Positions 224, 235, and 304 each coordinate a divalent metal cation. Histidine 312 serves as a coordination point for substrate. A divalent metal cation contacts are provided by glutamate 337 and glutamate 432.

The protein belongs to the peptidase M24A family. Methionine aminopeptidase eukaryotic type 2 subfamily. The cofactor is Co(2+). Zn(2+) is required as a cofactor. Requires Mn(2+) as cofactor. Fe(2+) serves as cofactor.

It localises to the cytoplasm. It carries out the reaction Release of N-terminal amino acids, preferentially methionine, from peptides and arylamides.. Cotranslationally removes the N-terminal methionine from nascent proteins. The N-terminal methionine is often cleaved when the second residue in the primary sequence is small and uncharged (Met-Ala-, Cys, Gly, Pro, Ser, Thr, or Val). The chain is Methionine aminopeptidase 2-2 from Leptosphaeria maculans (strain JN3 / isolate v23.1.3 / race Av1-4-5-6-7-8) (Blackleg fungus).